The primary structure comprises 395 residues: Torsin-3A (395 aa).

Positions 1 to 24 (MFFGAFWLLLLLLLPPLRPPGAQG) are cleaved as a signal peptide. N120 carries an N-linked (GlcNAc...) asparagine glycan. 165 to 172 (GWSGTGKN) lines the ATP pocket.

This sequence belongs to the ClpA/ClpB family. Torsin subfamily. In terms of assembly, may not form homohexamers. In terms of processing, N-glycosylated.

It is found in the cytoplasm. The protein localises to the endoplasmic reticulum lumen. The polypeptide is Torsin-3A (Tor3a) (Rattus norvegicus (Rat)).